We begin with the raw amino-acid sequence, 629 residues long: MDFPKSFDVIVIGGGHAGTEAALAAARMGSQTLLLTHNIETLGQMSCNPAIGGIGKSHLVKEVDALGGAMALATDRAGIQFRVLNSRKGPAVRATRAQADRALYKAAIREILENQPNLTIFQQAADDLIMQGDHVAGVVTQMGLRFHSKTVVLTTGTFLGGVIHIGLENHSGGRAGDPPSIALAKRLREMPFRVGRLKTGTPPRIDARSVDFSVMEAQPGDTPIPVMSFMGSVDLHPHQVNCFITRTNERTHEIIRGGMDRSPMYTGVIEGVGPRYCPSIEDKVNRFSDKDSHQVFIEPEGLSTHELYPNGISTSLPFDVQLQLVHSIQGMENAHITRPGYAIEYDFFNPQDLKHSLETKFVGSLFFAGQINGTTGYEEAAAQGLLAGMNAALRAQEKEAWSPRRDEAYIGVLVDDLITMGTREPYRMFTSRAEYRLLLREDNADLRLTEKGRELGMIDDERWRVFCEKREAIAREQQRLKSIWIQPATEKARKAAELLETELTREYSLHDLLKRPEMTWEKLSLLDADVAATPYEVAEQLEIQVKYAGYIDRQQEEIERLRRNENMALPADLDYSGIQGLSNEIKQKLTEVRPETLAQASRIPGVTPAAVSLLLVHLKKRGSLQRKSA.

13-18 (GGGHAG) lines the FAD pocket. NAD(+) is bound at residue 273–287 (GPRYCPSIEDKVNRF).

It belongs to the MnmG family. As to quaternary structure, homodimer. Heterotetramer of two MnmE and two MnmG subunits. It depends on FAD as a cofactor.

The protein resides in the cytoplasm. Functionally, NAD-binding protein involved in the addition of a carboxymethylaminomethyl (cmnm) group at the wobble position (U34) of certain tRNAs, forming tRNA-cmnm(5)s(2)U34. The polypeptide is tRNA uridine 5-carboxymethylaminomethyl modification enzyme MnmG (Hahella chejuensis (strain KCTC 2396)).